A 982-amino-acid chain; its full sequence is Serine/threonine-protein kinase SULU (982 aa).

The Protein kinase domain occupies Y30–I289. Residues I36–V44 and K59 each bind ATP. D153 acts as the Proton acceptor in catalysis. Disordered regions lie at residues G331–T484, Q592–Q620, L751–K789, and R957–M982. Residues S353 to S373 are compositionally biased toward low complexity. Residues Q421–V431 are compositionally biased toward polar residues. Low complexity predominate over residues I459–S472. Residues E595–K608 are compositionally biased toward basic and acidic residues. Polar residues predominate over residues S759–R768. Over residues R957–G967 the composition is skewed to low complexity. Positions G973–M982 are enriched in polar residues.

It belongs to the protein kinase superfamily. Ser/Thr protein kinase family. STE20 subfamily. Mg(2+) is required as a cofactor. In terms of tissue distribution, expressed in the pharynx, including the pharyngeal muscle of the metacorpus, the isthmus, and the terminal bulb; in the intestine, including the pharyngeointestinal valve between the pharynx and the intestine, a structure near the anus likely to be the anal sphincter and the excretory cell and in several ring neurons.

It is found in the cytoplasm. The protein localises to the cytoskeleton. Its subcellular location is the cell cortex. It carries out the reaction L-seryl-[protein] + ATP = O-phospho-L-seryl-[protein] + ADP + H(+). The catalysed reaction is L-threonyl-[protein] + ATP = O-phospho-L-threonyl-[protein] + ADP + H(+). Acts as a negative regulator of cortical contractions during early embryonic cell division, possibly by regulating rho-1-dependent actomyosin contractility. Plays a role in polarity establishment in early embryos by regulating the size of the anterior and posterior cortex in the first asymmetric cell division. Might play a role in cell cycle progression. In the germline, involved in the regulation of meiotic progression during oogenesis, possibly by modulating the timing of mpk-1 activation. Plays a role in meiotic recombination events. Involved in pharyngeal pumping. This chain is Serine/threonine-protein kinase SULU (kin-18), found in Caenorhabditis elegans.